The sequence spans 335 residues: NADH-quinone oxidoreductase subunit H (335 aa).

The next 8 helical transmembrane spans lie at 12–32 (IIAVVKAIVVLLAVVVCGALL), 81–101 (VIFTLAPVVAMSALLIAFAVI), 114–134 (IGLLFFFAMAGLSVYAVLFAG), 154–174 (VSYEVFMGLALMGIVVQVGSF), 187–207 (LWFIIPQFFGFCTFFIAGVAV), 238–258 (FFVGEYIGIILISALLVTLFF), 270–290 (SLAFFWFALKTAFFIMLFILL), and 307–327 (WKFCLPLTLINLLVTAAIVLL).

This sequence belongs to the complex I subunit 1 family. NDH-1 is composed of 13 different subunits. Subunits NuoA, H, J, K, L, M, N constitute the membrane sector of the complex.

Its subcellular location is the cell inner membrane. It catalyses the reaction a quinone + NADH + 5 H(+)(in) = a quinol + NAD(+) + 4 H(+)(out). Functionally, NDH-1 shuttles electrons from NADH, via FMN and iron-sulfur (Fe-S) centers, to quinones in the respiratory chain. The immediate electron acceptor for the enzyme in this species is believed to be ubiquinone. Couples the redox reaction to proton translocation (for every two electrons transferred, four hydrogen ions are translocated across the cytoplasmic membrane), and thus conserves the redox energy in a proton gradient. This subunit may bind ubiquinone. This chain is NADH-quinone oxidoreductase subunit H, found in Pseudomonas syringae pv. syringae (strain B728a).